Consider the following 516-residue polypeptide: Maturase K (516 aa).

It belongs to the intron maturase 2 family. MatK subfamily.

It is found in the plastid. It localises to the chloroplast. Usually encoded in the trnK tRNA gene intron. Probably assists in splicing its own and other chloroplast group II introns. This Galanthus nivalis (Common snowdrop) protein is Maturase K.